The chain runs to 138 residues: Probable DNA-directed RNA polymerases I, II, and III subunit RPABC2 (138 aa).

2 stretches are compositionally biased toward acidic residues: residues Met-1 to Glu-27 and Glu-35 to Asn-46. Positions Met-1 to Asn-46 are disordered.

Belongs to the archaeal Rpo6/eukaryotic RPB6 RNA polymerase subunit family. In terms of assembly, component of the RNA polymerase I (Pol I), RNA polymerase II (Pol II) and RNA polymerase III (Pol III) complexes consisting of at least 13, 12 and 17 subunits, respectively.

Its subcellular location is the nucleus. DNA-dependent RNA polymerases catalyze the transcription of DNA into RNA using the four ribonucleoside triphosphates as substrates. Common component of RNA polymerases I, II and III which synthesize ribosomal RNA precursors, mRNA precursors and many functional non-coding RNAs, and small RNAs, such as 5S rRNA and tRNAs, respectively. Pol II is the central component of the basal RNA polymerase II transcription machinery. Pols are composed of mobile elements that move relative to each other. In Pol II, RPB6 is part of the clamp element and together with parts of RPB1 and RPB2 forms a pocket to which the RPB4-RPB7 subcomplex binds. This is Probable DNA-directed RNA polymerases I, II, and III subunit RPABC2 from Caenorhabditis briggsae.